The chain runs to 465 residues: Probable glycine dehydrogenase (decarboxylating) subunit 1 (465 aa).

It belongs to the GcvP family. N-terminal subunit subfamily. In terms of assembly, the glycine cleavage system is composed of four proteins: P, T, L and H. In this organism, the P 'protein' is a heterodimer of two subunits.

The catalysed reaction is N(6)-[(R)-lipoyl]-L-lysyl-[glycine-cleavage complex H protein] + glycine + H(+) = N(6)-[(R)-S(8)-aminomethyldihydrolipoyl]-L-lysyl-[glycine-cleavage complex H protein] + CO2. The glycine cleavage system catalyzes the degradation of glycine. The P protein binds the alpha-amino group of glycine through its pyridoxal phosphate cofactor; CO(2) is released and the remaining methylamine moiety is then transferred to the lipoamide cofactor of the H protein. The protein is Probable glycine dehydrogenase (decarboxylating) subunit 1 of Aeropyrum pernix (strain ATCC 700893 / DSM 11879 / JCM 9820 / NBRC 100138 / K1).